A 400-amino-acid chain; its full sequence is Carbamoyl phosphate synthase small chain (400 aa).

The tract at residues 1–199 is CPSase; that stretch reads MSNETNANST…PYVIEAEGEA (199 aa). Residues Ser-66, Gly-250, and Gly-252 each coordinate L-glutamine. Residues 200-395 form the Glutamine amidotransferase type-1 domain; that stretch reads RHTVVAYDLG…VALMDEDSEN (196 aa). Cys-278 serves as the catalytic Nucleophile. Residues Phe-279, Gln-282, Asn-320, Gly-322, and Phe-323 each contribute to the L-glutamine site. Active-site residues include His-368 and Glu-370.

Belongs to the CarA family. Composed of two chains; the small (or glutamine) chain promotes the hydrolysis of glutamine to ammonia, which is used by the large (or ammonia) chain to synthesize carbamoyl phosphate. Tetramer of heterodimers (alpha,beta)4.

It catalyses the reaction hydrogencarbonate + L-glutamine + 2 ATP + H2O = carbamoyl phosphate + L-glutamate + 2 ADP + phosphate + 2 H(+). It carries out the reaction L-glutamine + H2O = L-glutamate + NH4(+). The protein operates within amino-acid biosynthesis; L-arginine biosynthesis; carbamoyl phosphate from bicarbonate: step 1/1. It functions in the pathway pyrimidine metabolism; UMP biosynthesis via de novo pathway; (S)-dihydroorotate from bicarbonate: step 1/3. Its function is as follows. Small subunit of the glutamine-dependent carbamoyl phosphate synthetase (CPSase). CPSase catalyzes the formation of carbamoyl phosphate from the ammonia moiety of glutamine, carbonate, and phosphate donated by ATP, constituting the first step of 2 biosynthetic pathways, one leading to arginine and/or urea and the other to pyrimidine nucleotides. The small subunit (glutamine amidotransferase) binds and cleaves glutamine to supply the large subunit with the substrate ammonia. This is Carbamoyl phosphate synthase small chain from Corynebacterium efficiens (strain DSM 44549 / YS-314 / AJ 12310 / JCM 11189 / NBRC 100395).